The chain runs to 285 residues: Shikimate dehydrogenase (NADP(+)) (285 aa).

Residues S20–S22 and T67 each bind shikimate. The active-site Proton acceptor is the K71. Shikimate is bound by residues N93 and D108. NADP(+) contacts are provided by residues G132–A136 and M224. A shikimate-binding site is contributed by Y226. G248 contributes to the NADP(+) binding site.

This sequence belongs to the shikimate dehydrogenase family. In terms of assembly, homodimer.

The catalysed reaction is shikimate + NADP(+) = 3-dehydroshikimate + NADPH + H(+). It participates in metabolic intermediate biosynthesis; chorismate biosynthesis; chorismate from D-erythrose 4-phosphate and phosphoenolpyruvate: step 4/7. Involved in the biosynthesis of the chorismate, which leads to the biosynthesis of aromatic amino acids. Catalyzes the reversible NADPH linked reduction of 3-dehydroshikimate (DHSA) to yield shikimate (SA). In Bordetella avium (strain 197N), this protein is Shikimate dehydrogenase (NADP(+)).